A 304-amino-acid chain; its full sequence is tRNA dimethylallyltransferase (304 aa).

ATP is bound at residue 16–23; that stretch reads GPTASGKS. 18 to 23 contacts substrate; the sequence is TASGKS. Interaction with substrate tRNA stretches follow at residues 41-44 and 165-169; these read DSMQ and QRIIR.

This sequence belongs to the IPP transferase family. As to quaternary structure, monomer. Mg(2+) serves as cofactor.

It carries out the reaction adenosine(37) in tRNA + dimethylallyl diphosphate = N(6)-dimethylallyladenosine(37) in tRNA + diphosphate. Its function is as follows. Catalyzes the transfer of a dimethylallyl group onto the adenine at position 37 in tRNAs that read codons beginning with uridine, leading to the formation of N6-(dimethylallyl)adenosine (i(6)A). The protein is tRNA dimethylallyltransferase of Allorhizobium ampelinum (strain ATCC BAA-846 / DSM 112012 / S4) (Agrobacterium vitis (strain S4)).